The primary structure comprises 197 residues: Small ribosomal subunit protein uS4c (197 aa).

Residues 85 to 161 (MRLDNILFRL…TGKELANHLN (77 aa)) form the S4 RNA-binding domain.

Belongs to the universal ribosomal protein uS4 family. In terms of assembly, part of the 30S ribosomal subunit. Contacts protein S5. The interaction surface between S4 and S5 is involved in control of translational fidelity.

The protein localises to the plastid. Functionally, one of the primary rRNA binding proteins, it binds directly to 16S rRNA where it nucleates assembly of the body of the 30S subunit. Its function is as follows. With S5 and S12 plays an important role in translational accuracy. The protein is Small ribosomal subunit protein uS4c (rps4) of Cuscuta sandwichiana (Kauna'oa).